Here is a 199-residue protein sequence, read N- to C-terminus: N-(5'-phosphoribosyl)anthranilate isomerase (199 aa).

It belongs to the TrpF family.

The enzyme catalyses N-(5-phospho-beta-D-ribosyl)anthranilate = 1-(2-carboxyphenylamino)-1-deoxy-D-ribulose 5-phosphate. It participates in amino-acid biosynthesis; L-tryptophan biosynthesis; L-tryptophan from chorismate: step 3/5. In Streptococcus pneumoniae serotype 19F (strain G54), this protein is N-(5'-phosphoribosyl)anthranilate isomerase.